The primary structure comprises 405 residues: Magnesium-protoporphyrin IX monomethyl ester [oxidative] cyclase, chloroplastic (405 aa).

A chloroplast-targeting transit peptide spans 1-43 (MATEMALVKPISKFSTSSPIFSNSRYGKFTTVRMSSTSQSTTK).

Belongs to the AcsF family. Fe cation is required as a cofactor.

It localises to the plastid. It is found in the chloroplast. It catalyses the reaction Mg-protoporphyrin IX 13-monomethyl ester + 3 NADPH + 3 O2 + 2 H(+) = 3,8-divinyl protochlorophyllide a + 3 NADP(+) + 5 H2O. It participates in porphyrin-containing compound metabolism; chlorophyll biosynthesis. Catalyzes the formation of the isocyclic ring in chlorophyll biosynthesis. Mediates the cyclase reaction, which results in the formation of divinylprotochlorophyllide (Pchlide) characteristic of all chlorophylls from magnesium-protoporphyrin IX 13-monomethyl ester (MgPMME). The polypeptide is Magnesium-protoporphyrin IX monomethyl ester [oxidative] cyclase, chloroplastic (CRD1) (Gossypium hirsutum (Upland cotton)).